We begin with the raw amino-acid sequence, 373 residues long: uncharacterized protein (373 aa).

The helical transmembrane segment at 180-202 (YYVVALGTLALGSILGYTAKYVW) threads the bilayer.

The protein localises to the membrane. This is an uncharacterized protein from Rickettsia prowazekii (strain Madrid E).